The chain runs to 142 residues: Hemoglobin subunit alpha (142 aa).

One can recognise a Globin domain in the interval 2–142 (VLSAADKTNV…LSTVLTSKYR (141 aa)). S4 is subject to Phosphoserine. N6-succinyllysine is present on K8. The residue at position 9 (T9) is a Phosphothreonine. K12 bears the N6-succinyllysine mark. N6-acetyllysine; alternate is present on K17. K17 carries the N6-succinyllysine; alternate modification. At Y25 the chain carries Phosphotyrosine. Phosphoserine is present on S36. The residue at position 41 (K41) is an N6-succinyllysine. S50 carries the phosphoserine modification. Q59 is an O2 binding site. Residue H88 coordinates heme b. T109 carries the phosphothreonine modification. Residue S125 is modified to Phosphoserine. T135 and T138 each carry phosphothreonine. S139 carries the post-translational modification Phosphoserine.

Belongs to the globin family. As to quaternary structure, heterotetramer of two alpha chains and two beta chains. Red blood cells.

Involved in oxygen transport from the lung to the various peripheral tissues. In terms of biological role, hemopressin acts as an antagonist peptide of the cannabinoid receptor CNR1. Hemopressin-binding efficiently blocks cannabinoid receptor CNR1 and subsequent signaling. The protein is Hemoglobin subunit alpha (HBA) of Monodelphis domestica (Gray short-tailed opossum).